The following is a 180-amino-acid chain: Ribulose bisphosphate carboxylase small subunit, chloroplastic (180 aa).

A chloroplast-targeting transit peptide spans 1–57; the sequence is MVSSMMVSSAATFTRASPAQSSMVAPFTGLKSASAFPVTRKPNADLSHLPSNGGRVQ.

It belongs to the RuBisCO small chain family. Heterohexadecamer of 8 large and 8 small subunits.

The protein localises to the plastid. It is found in the chloroplast. RuBisCO catalyzes two reactions: the carboxylation of D-ribulose 1,5-bisphosphate, the primary event in carbon dioxide fixation, as well as the oxidative fragmentation of the pentose substrate. Both reactions occur simultaneously and in competition at the same active site. Although the small subunit is not catalytic it is essential for maximal activity. This chain is Ribulose bisphosphate carboxylase small subunit, chloroplastic, found in Musa acuminata (Banana).